The following is a 361-amino-acid chain: Chorismate synthase (361 aa).

NADP(+) is bound by residues arginine 48 and arginine 54. FMN-binding positions include 125 to 127, 238 to 239, glycine 278, 293 to 297, and arginine 319; these read RSS, NA, and KPTSS.

It belongs to the chorismate synthase family. Homotetramer. It depends on FMNH2 as a cofactor.

It catalyses the reaction 5-O-(1-carboxyvinyl)-3-phosphoshikimate = chorismate + phosphate. It functions in the pathway metabolic intermediate biosynthesis; chorismate biosynthesis; chorismate from D-erythrose 4-phosphate and phosphoenolpyruvate: step 7/7. Its function is as follows. Catalyzes the anti-1,4-elimination of the C-3 phosphate and the C-6 proR hydrogen from 5-enolpyruvylshikimate-3-phosphate (EPSP) to yield chorismate, which is the branch point compound that serves as the starting substrate for the three terminal pathways of aromatic amino acid biosynthesis. This reaction introduces a second double bond into the aromatic ring system. This Vibrio vulnificus (strain CMCP6) protein is Chorismate synthase.